Consider the following 384-residue polypeptide: Spermidine/putrescine import ATP-binding protein PotA (384 aa).

Positions 6–238 (ITFNNVSKTF…PINHFVANFI (233 aa)) constitute an ABC transporter domain. Position 40 to 47 (40 to 47 (GASGSGKS)) interacts with ATP.

This sequence belongs to the ABC transporter superfamily. Spermidine/putrescine importer (TC 3.A.1.11.1) family. As to quaternary structure, the complex is composed of two ATP-binding proteins (PotA), two transmembrane proteins (PotB and PotC) and a solute-binding protein (PotD).

The protein localises to the cell membrane. It carries out the reaction ATP + H2O + polyamine-[polyamine-binding protein]Side 1 = ADP + phosphate + polyamineSide 2 + [polyamine-binding protein]Side 1.. In terms of biological role, part of the ABC transporter complex PotABCD involved in spermidine/putrescine import. Responsible for energy coupling to the transport system. This chain is Spermidine/putrescine import ATP-binding protein PotA, found in Streptococcus pyogenes serotype M28 (strain MGAS6180).